A 291-amino-acid chain; its full sequence is Homeobox protein knotted-1-like 7 (291 aa).

The 21-residue stretch at 194 to 214 (ELKLELKQGFKSRIEDVREEI) folds into the ELK domain. Positions 215–278 (MRKRRAGKLP…NQRKRNWHNN (64 aa)) form a DNA-binding region, homeobox; TALE-type.

This sequence belongs to the TALE/KNOX homeobox family. As to quaternary structure, may form heterodimeric complex with the TALE/BELL proteins. Interacts with OFP1, OFP2, OFP3, OFP4 and OFP6.

It localises to the nucleus. In terms of biological role, may be involved in secondary cell wall biosynthesis. The protein is Homeobox protein knotted-1-like 7 (KNAT7) of Arabidopsis thaliana (Mouse-ear cress).